The sequence spans 384 residues: UDP-N-acetylglucosamine--N-acetylmuramyl-(pentapeptide) pyrophosphoryl-undecaprenol N-acetylglucosamine transferase (384 aa).

Residues 22-24 (TGG), Arg-179, Ser-209, and Gln-312 each bind UDP-N-acetyl-alpha-D-glucosamine.

It belongs to the glycosyltransferase 28 family. MurG subfamily.

It is found in the cell inner membrane. It carries out the reaction di-trans,octa-cis-undecaprenyl diphospho-N-acetyl-alpha-D-muramoyl-L-alanyl-D-glutamyl-meso-2,6-diaminopimeloyl-D-alanyl-D-alanine + UDP-N-acetyl-alpha-D-glucosamine = di-trans,octa-cis-undecaprenyl diphospho-[N-acetyl-alpha-D-glucosaminyl-(1-&gt;4)]-N-acetyl-alpha-D-muramoyl-L-alanyl-D-glutamyl-meso-2,6-diaminopimeloyl-D-alanyl-D-alanine + UDP + H(+). It functions in the pathway cell wall biogenesis; peptidoglycan biosynthesis. Cell wall formation. Catalyzes the transfer of a GlcNAc subunit on undecaprenyl-pyrophosphoryl-MurNAc-pentapeptide (lipid intermediate I) to form undecaprenyl-pyrophosphoryl-MurNAc-(pentapeptide)GlcNAc (lipid intermediate II). The sequence is that of UDP-N-acetylglucosamine--N-acetylmuramyl-(pentapeptide) pyrophosphoryl-undecaprenol N-acetylglucosamine transferase from Treponema pallidum (strain Nichols).